Reading from the N-terminus, the 908-residue chain is NADH-quinone oxidoreductase subunit G (908 aa).

The 2Fe-2S ferredoxin-type domain occupies Ala2 to Glu83. [2Fe-2S] cluster-binding residues include Cys34, Cys45, Cys48, and Cys67. The 4Fe-4S His(Cys)3-ligated-type domain maps to Glu83–Gly122. 12 residues coordinate [4Fe-4S] cluster: His99, Cys103, Cys106, Cys112, Cys151, Cys154, Cys157, Cys201, Cys228, Cys231, Cys235, and Cys263. A 4Fe-4S Mo/W bis-MGD-type domain is found at Met221–Asp277.

The protein belongs to the complex I 75 kDa subunit family. In terms of assembly, composed of 13 different subunits. Subunits NuoCD, E, F, and G constitute the peripheral sector of the complex. Requires [2Fe-2S] cluster as cofactor. It depends on [4Fe-4S] cluster as a cofactor.

The catalysed reaction is a quinone + NADH + 5 H(+)(in) = a quinol + NAD(+) + 4 H(+)(out). Functionally, NDH-1 shuttles electrons from NADH, via FMN and iron-sulfur (Fe-S) centers, to quinones in the respiratory chain. The immediate electron acceptor for the enzyme in this species is believed to be ubiquinone. Couples the redox reaction to proton translocation (for every two electrons transferred, four hydrogen ions are translocated across the cytoplasmic membrane), and thus conserves the redox energy in a proton gradient. In Escherichia coli O6:H1 (strain CFT073 / ATCC 700928 / UPEC), this protein is NADH-quinone oxidoreductase subunit G (nuoG).